The following is a 556-amino-acid chain: Neurofilament light polypeptide (556 aa).

Residue Ser-2 is modified to N-acetylserine. The interval 2-94 (SSYGYDPFFP…KSIRSQERAQ (93 aa)) is head. In terms of domain architecture, IF rod spans 91–402 (ERAQLQDLND…KLLEGEETRL (312 aa)). A coil 1A region spans residues 95 to 126 (LQDLNDRFACFIERVHELEQQNKVLEAELLVL). A linker 1 region spans residues 127 to 139 (RQKHAEPSRFRAL). Positions 140 to 235 (YEQEIRELRL…KVHEEELAEL (96 aa)) are coil 1B. The linker 12 stretch occupies residues 236–254 (QAQIQYAHLSVEMDVSAKP). Residues 255–273 (DLSAALRDIRAQYEKLAAR) are coil 2A. The segment at 274 to 282 (NMQNAEEWF) is linker 2. Positions 283–398 (RSRFTVLSES…AAYRKLLEGE (116 aa)) are coil 2B. The interval 399–445 (ETRLSFTSVGSITSGYTQTAPTFGRSAYSGLQSTSYLMTTRSFPTYY) is tail, subdomain A. The interval 399–556 (ETRLSFTSVG…KEETEVKKKA (158 aa)) is tail. Positions 446–556 (SSHVQEEQIE…KEETEVKKKA (111 aa)) are tail, subdomain B (acidic). Low complexity predominate over residues 464 to 473 (KAGEAKAAPA). The interval 464–556 (KAGEAKAAPA…KEETEVKKKA (93 aa)) is disordered. Positions 474 to 540 (EEGEEEEKEE…AEETGEEEKE (67 aa)) are enriched in acidic residues. The span at 541–556 (EKEAAGKEETEVKKKA) shows a compositional bias: basic and acidic residues.

Belongs to the intermediate filament family. In terms of assembly, forms homodimers (in vitro).

It localises to the cell projection. It is found in the axon. Its subcellular location is the cytoplasm. The protein resides in the cytoskeleton. Its function is as follows. Neurofilaments usually contain three intermediate filament proteins: NEFL, NEFM, and NEFH which are involved in the maintenance of neuronal caliber. May additionally cooperate with the neuronal intermediate filament proteins to form neuronal filamentous networks. This chain is Neurofilament light polypeptide (NEFL), found in Coturnix japonica (Japanese quail).